We begin with the raw amino-acid sequence, 506 residues long: 26S proteasome non-ATPase regulatory subunit 5 (506 aa).

This sequence belongs to the proteasome subunit S5B/HSM3 family. As to quaternary structure, interacts with PI31; this interaction is increased by PI31 ADP-ribosylation. Interacts with Rpt2.

Functionally, acts as a chaperone during the assembly of the 26S proteasome. In Drosophila melanogaster (Fruit fly), this protein is 26S proteasome non-ATPase regulatory subunit 5.